The primary structure comprises 541 residues: DNA polymerase epsilon subunit B (541 aa).

It belongs to the DNA polymerase epsilon subunit B family. In terms of assembly, heterotetramer. Consists of four subunits: POL2, DPB2, DPB3 and DPB4.

It localises to the nucleus. Its function is as follows. As accessory component of the DNA polymerase epsilon (DNA polymerase II) participates in chromosomal DNA replication. This is DNA polymerase epsilon subunit B (DPB2) from Cryptococcus neoformans var. neoformans serotype D (strain B-3501A) (Filobasidiella neoformans).